We begin with the raw amino-acid sequence, 68 residues long: uncharacterized protein (68 aa).

Residues 1 to 27 (MKGLLCFIYILSAILIGCVFLNKDVEA) form the signal peptide.

This is an uncharacterized protein from Invertebrate iridescent virus 6 (IIV-6).